The following is a 397-amino-acid chain: Serpin B10 (397 aa).

Cys68 and Cys395 are joined by a disulfide. The Nuclear localization signal motif lies at 74–77 (KKRK).

This sequence belongs to the serpin family. Ov-serpin subfamily. Expressed specifically in myeloid cells and the bone marrow.

The protein localises to the nucleus. It localises to the cytoplasm. In terms of biological role, protease inhibitor that may play a role in the regulation of protease activities during hematopoiesis and apoptosis induced by TNF. May regulate protease activities in the cytoplasm and in the nucleus. The sequence is that of Serpin B10 (SERPINB10) from Homo sapiens (Human).